The following is a 135-amino-acid chain: uncharacterized protein (135 aa).

Helical transmembrane passes span 7-25 (WSAAVLAAAVSFLYGEWTI), 29-51 (ILLTLVVIDYGTGLVAAGVTGNI), 64-85 (VFIFVMVAIAHMIDTVLLEVGI), and 89-108 (ALIFMAAVVFYIVNELISIF).

It belongs to the bacteriophage holin family. Cp-1 holin subfamily.

The protein localises to the cell membrane. This is an uncharacterized protein from Halalkalibacterium halodurans (strain ATCC BAA-125 / DSM 18197 / FERM 7344 / JCM 9153 / C-125) (Bacillus halodurans).